A 204-amino-acid polypeptide reads, in one-letter code: Elongation factor Ts (204 aa).

The involved in Mg(2+) ion dislocation from EF-Tu stretch occupies residues 87-90 (TDFV).

The protein belongs to the EF-Ts family.

The protein resides in the cytoplasm. Its function is as follows. Associates with the EF-Tu.GDP complex and induces the exchange of GDP to GTP. It remains bound to the aminoacyl-tRNA.EF-Tu.GTP complex up to the GTP hydrolysis stage on the ribosome. The sequence is that of Elongation factor Ts from Frankia casuarinae (strain DSM 45818 / CECT 9043 / HFP020203 / CcI3).